The sequence spans 294 residues: Acetyl-coenzyme A carboxylase carboxyl transferase subunit beta (294 aa).

Residues 25-294 (VWTKCTACEQ…PFLEPEIIAD (270 aa)) enclose the CoA carboxyltransferase N-terminal domain. The Zn(2+) site is built by C29, C32, C48, and C51. A C4-type zinc finger spans residues 29 to 51 (CTACEQVLYRDELKRHLEVCPKC).

Belongs to the AccD/PCCB family. In terms of assembly, acetyl-CoA carboxylase is a heterohexamer composed of biotin carboxyl carrier protein (AccB), biotin carboxylase (AccC) and two subunits each of ACCase subunit alpha (AccA) and ACCase subunit beta (AccD). Requires Zn(2+) as cofactor.

The protein localises to the cytoplasm. The enzyme catalyses N(6)-carboxybiotinyl-L-lysyl-[protein] + acetyl-CoA = N(6)-biotinyl-L-lysyl-[protein] + malonyl-CoA. Its pathway is lipid metabolism; malonyl-CoA biosynthesis; malonyl-CoA from acetyl-CoA: step 1/1. Functionally, component of the acetyl coenzyme A carboxylase (ACC) complex. Biotin carboxylase (BC) catalyzes the carboxylation of biotin on its carrier protein (BCCP) and then the CO(2) group is transferred by the transcarboxylase to acetyl-CoA to form malonyl-CoA. The protein is Acetyl-coenzyme A carboxylase carboxyl transferase subunit beta of Actinobacillus succinogenes (strain ATCC 55618 / DSM 22257 / CCUG 43843 / 130Z).